A 344-amino-acid polypeptide reads, in one-letter code: Protein YIPF3 (344 aa).

Residues 1 to 12 (MSASQGSKNTNA) are compositionally biased toward polar residues. The tract at residues 1–24 (MSASQGSKNTNAEPWGGFDDNIIQ) is disordered. Over 1–146 (MSASQGSKNT…PVRMINFPQK (146 aa)) the chain is Cytoplasmic. Residues 147-167 (VAGELYGPMMLVFTLVAILLH) form a helical membrane-spanning segment. Topologically, residues 168 to 185 (GMKTSGTVIREGTLMGTA) are lumenal. The helical transmembrane segment at 186–206 (IGTGFGYWLGVSSFIYFLAYL) threads the bilayer. Residues 207 to 212 (CNAQIT) are Cytoplasmic-facing. Residues 213 to 233 (MLQMLSLLGYGLFGHCVVLFI) traverse the membrane as a helical segment. Over 234-242 (TYNVHFHSL) the chain is Lumenal. A helical transmembrane segment spans residues 243–263 (FYLLWMVIGGLSTLRMVAVLI). Topologically, residues 264 to 272 (SRTVGQTPR) are cytoplasmic. A helical transmembrane segment spans residues 273-293 (LILCGSLAALHMLFLLYLHFA). Over 294–344 (YHKMVEGILDTLEGPNIPPIQRVARDVPVVASAVVNATVKSIAAIVQSQQL) the chain is Lumenal. Asparagine 329 is a glycosylation site (N-linked (GlcNAc...) asparagine).

It belongs to the YIP1 family.

Its subcellular location is the cell membrane. It localises to the golgi apparatus. The protein localises to the cis-Golgi network membrane. The protein resides in the cytoplasm. Involved in the maintenance of the Golgi structure. May play a role in hematopoiesis. In Danio rerio (Zebrafish), this protein is Protein YIPF3 (yipf3).